Consider the following 437-residue polypeptide: UDP-N-acetylmuramate--L-alanine ligase (437 aa).

108–114 (GAHGKTS) contributes to the ATP binding site.

This sequence belongs to the MurCDEF family.

The protein localises to the cytoplasm. The enzyme catalyses UDP-N-acetyl-alpha-D-muramate + L-alanine + ATP = UDP-N-acetyl-alpha-D-muramoyl-L-alanine + ADP + phosphate + H(+). It participates in cell wall biogenesis; peptidoglycan biosynthesis. Its function is as follows. Cell wall formation. This Staphylococcus epidermidis (strain ATCC 12228 / FDA PCI 1200) protein is UDP-N-acetylmuramate--L-alanine ligase.